The chain runs to 262 residues: Urease accessory protein UreD (262 aa).

The protein belongs to the UreD family. As to quaternary structure, ureD, UreF and UreG form a complex that acts as a GTP-hydrolysis-dependent molecular chaperone, activating the urease apoprotein by helping to assemble the nickel containing metallocenter of UreC. The UreE protein probably delivers the nickel.

The protein localises to the cytoplasm. Its function is as follows. Required for maturation of urease via the functional incorporation of the urease nickel metallocenter. The protein is Urease accessory protein UreD of Acetivibrio thermocellus (strain ATCC 27405 / DSM 1237 / JCM 9322 / NBRC 103400 / NCIMB 10682 / NRRL B-4536 / VPI 7372) (Clostridium thermocellum).